Reading from the N-terminus, the 119-residue chain is Large ribosomal subunit protein bL20 (119 aa).

It belongs to the bacterial ribosomal protein bL20 family.

Binds directly to 23S ribosomal RNA and is necessary for the in vitro assembly process of the 50S ribosomal subunit. It is not involved in the protein synthesizing functions of that subunit. The polypeptide is Large ribosomal subunit protein bL20 (Alkaliphilus metalliredigens (strain QYMF)).